Consider the following 104-residue polypeptide: MIMTNTEAVAGHKIIKNLGLVKGNTIRAKHIGKDIMASLRSIVGGEIEEYTQMLDEARNEALKRMEADAKEKGANAIICVRFSTSAVMQNASEVMAYGTAVIVE.

The protein belongs to the UPF0145 family.

The sequence is that of UPF0145 protein cbdbA1711 from Dehalococcoides mccartyi (strain CBDB1).